The chain runs to 77 residues: Small ribosomal subunit protein bS20 (77 aa).

Belongs to the bacterial ribosomal protein bS20 family.

Functionally, binds directly to 16S ribosomal RNA. This Lactococcus lactis subsp. lactis (strain IL1403) (Streptococcus lactis) protein is Small ribosomal subunit protein bS20.